A 178-amino-acid polypeptide reads, in one-letter code: CDP-diacylglycerol--glycerol-3-phosphate 3-phosphatidyltransferase (178 aa).

Helical transmembrane passes span 5–25, 32–52, 61–81, and 145–165; these read PNYLTIARIMVIPVIILLFYI, KLGALLFVLASITDFFDGYIA, FGKMFDPIADKLLVGCVTIML, and IIYLDIVGEIILWIAAFLTII.

It belongs to the CDP-alcohol phosphatidyltransferase class-I family.

Its subcellular location is the cell membrane. It carries out the reaction a CDP-1,2-diacyl-sn-glycerol + sn-glycerol 3-phosphate = a 1,2-diacyl-sn-glycero-3-phospho-(1'-sn-glycero-3'-phosphate) + CMP + H(+). Its pathway is phospholipid metabolism; phosphatidylglycerol biosynthesis; phosphatidylglycerol from CDP-diacylglycerol: step 1/2. Functionally, this protein catalyzes the committed step to the synthesis of the acidic phospholipids. The chain is CDP-diacylglycerol--glycerol-3-phosphate 3-phosphatidyltransferase (pgsA) from Rickettsia typhi (strain ATCC VR-144 / Wilmington).